A 22-amino-acid polypeptide reads, in one-letter code: C-type natriuretic peptide (22 aa).

Cysteine 6 and cysteine 22 are joined by a disulfide.

This sequence belongs to the natriuretic peptide family.

It localises to the secreted. Its function is as follows. Hormone which plays a role in endochondral ossification through regulation of cartilaginous growth plate chondrocytes proliferation and differentiation. May also be vasoactive and natriuretic. Specifically binds and stimulates the cGMP production of the NPR2 receptor. Binds the clearance receptor NPR3. This chain is C-type natriuretic peptide (NPPC), found in Gallus gallus (Chicken).